Here is a 389-residue protein sequence, read N- to C-terminus: Equilibrative nucleotide transporter 8 (389 aa).

10 helical membrane-spanning segments follow: residues 19 to 39, 57 to 77, 87 to 107, 119 to 139, 150 to 170, 187 to 207, 238 to 258, 266 to 286, 331 to 351, and 367 to 387; these read VAYV…NALI, TFTV…MTWN, NLGF…DWVW, LMVG…GSLI, MQAI…LRIA, HSYF…CNVL, WPAS…PGFI, LLQS…DFVG, VVVL…VLMI, and IFMV…GWLW.

The protein belongs to the SLC29A/ENT transporter (TC 2.A.57) family. Expressed in stems, flowers and siliques.

Its subcellular location is the cell membrane. In terms of biological role, may be involved in nucleoside transport. The protein is Equilibrative nucleotide transporter 8 (ETN8) of Arabidopsis thaliana (Mouse-ear cress).